We begin with the raw amino-acid sequence, 465 residues long: 6-phospho-beta-glucosidase GmuD (465 aa).

The active-site Proton donor is Glu170. Glu368 functions as the Nucleophile in the catalytic mechanism.

Belongs to the glycosyl hydrolase 1 family.

It carries out the reaction 6-phospho-beta-D-glucosyl-(1-&gt;4)-D-glucose + H2O = D-glucose 6-phosphate + D-glucose. Phospho-beta-D-glucosidase that seems to be involved in the degradation of glucomannan. Is also capable of hydrolyzing aryl-phospho-beta-D-glucosides, although very weakly, and plays only a minor role, if any, in the degradation of these substrates in vivo. This chain is 6-phospho-beta-glucosidase GmuD (gmuD), found in Bacillus subtilis (strain 168).